The sequence spans 119 residues: Protein yippee-like 3 (119 aa).

Positions 19-116 constitute a Yippee domain; sequence RRYSCVHCRA…IELSHMIKDN (98 aa). Residues C23, C26, C79, and C82 each contribute to the Zn(2+) site.

Belongs to the yippee family.

Its subcellular location is the nucleus. It is found in the nucleolus. Its function is as follows. May be involved in proliferation and apoptosis in myeloid precursor cells. The protein is Protein yippee-like 3 (ypel3) of Oryzias latipes (Japanese rice fish).